We begin with the raw amino-acid sequence, 247 residues long: Flagellar brake protein YcgR 2 (247 aa).

Residues 124 to 237 enclose the PilZ domain; the sequence is QRREYFRVET…DETRIQRYIA (114 aa).

The protein belongs to the YcgR family. In terms of assembly, monomer. Interacts with the flagellar basal bodies.

It localises to the bacterial flagellum basal body. Functionally, acts as a flagellar brake, regulating swimming and swarming in a bis-(3'-5') cyclic diguanylic acid (c-di-GMP)-dependent manner. Binds 1 c-di-GMP dimer per subunit. Increasing levels of c-di-GMP lead to decreased motility. The protein is Flagellar brake protein YcgR 2 of Dechloromonas aromatica (strain RCB).